Consider the following 284-residue polypeptide: Trimeric intracellular cation channel type B-B (284 aa).

Residues 1–15 (MESLSEVSVQFSQLS) are Lumenal-facing. A helical transmembrane segment spans residues 16-32 (MFPFFDMAHYLASVMSA). Topologically, residues 33-44 (REQAGALDIASH) are cytoplasmic. Residues 45–68 (SPMASWFSAMLHCFGGGILSSILL) form a helical membrane-spanning segment. Residues 69 to 79 (AEPPVGILANT) are Lumenal-facing. The chain crosses the membrane as a helical span at residues 80–99 (TNIMLASAIWYMVYYFPYDL). The Cytoplasmic segment spans residues 100-102 (FYN). A helical membrane pass occupies residues 103–121 (CFFFLPIRLIAAGMKEVTR). Lys-117 and Arg-121 together coordinate a 1,2-diacyl-sn-glycero-3-phospho-(1D-myo-inositol-4,5-bisphosphate). Residues 122–139 (TWKILSGITHAHSHYKDA) are Lumenal-facing. The chain crosses the membrane as a helical span at residues 140–157 (WLVMITIGWARGAGGGLI). Residues 158–178 (SNFEQLVRGVWKPESNEFLKM) are Cytoplasmic-facing. The helical transmembrane segment at 179–196 (SYPVKVTLIGAVLFTLQH) threads the bilayer. The Lumenal portion of the chain corresponds to 197–204 (GHYLPISR). The chain crosses the membrane as a helical span at residues 205–225 (HNLMFIYTMFLVSIKVTMMLT). Topologically, residues 226-284 (HSAGSPFLPLETPLHRILFGLRQNQAEVRESPSSSGAKGKPSKKTLDKDSGEQSNKKDK) are cytoplasmic. The interval 250–284 (QAEVRESPSSSGAKGKPSKKTLDKDSGEQSNKKDK) is disordered. The span at 269–284 (KTLDKDSGEQSNKKDK) shows a compositional bias: basic and acidic residues.

This sequence belongs to the TMEM38 family. Homotrimer; conformation seems to be controled by binding to diacylglycerol (DAG).

Its subcellular location is the endoplasmic reticulum membrane. It carries out the reaction K(+)(in) = K(+)(out). Its activity is regulated as follows. Channel activity is activated by increased cytosolic Ca(2+) levels and blocked by luminal high Ca(2+) levels. Intracellular monovalent cation channel required for maintenance of rapid intracellular calcium release. Acts as a potassium counter-ion channel that functions in synchronization with calcium release from intracellular stores. Activated by increased cytosolic Ca(2+) levels. In Xenopus laevis (African clawed frog), this protein is Trimeric intracellular cation channel type B-B (tmem38b-b).